A 502-amino-acid chain; its full sequence is ATP synthase subunit alpha, sodium ion specific (502 aa).

169 to 176 (GDRQTGKT) provides a ligand contact to ATP.

Belongs to the ATPase alpha/beta chains family. In terms of assembly, F-type ATPases have 2 components, CF(1) - the catalytic core - and CF(0) - the membrane proton channel. CF(1) has five subunits: alpha(3), beta(3), gamma(1), delta(1), epsilon(1). CF(0) has three main subunits: a, b and c.

Its subcellular location is the cell membrane. The enzyme catalyses 4 Na(+)(in) + ATP + H2O = 4 Na(+)(out) + ADP + phosphate + H(+). With respect to regulation, inhibited by nitrate. Produces ATP from ADP in the presence of a sodium ion gradient across the membrane. The alpha chain is a regulatory subunit. The polypeptide is ATP synthase subunit alpha, sodium ion specific (Acetobacterium woodii (strain ATCC 29683 / DSM 1030 / JCM 2381 / KCTC 1655 / WB1)).